Here is a 434-residue protein sequence, read N- to C-terminus: Glycerol-3-phosphate acyltransferase 3 (434 aa).

A helical transmembrane segment spans residues 14-34 (WLTLVLGFILLPSVFGVSLGI). 2 positions are modified to phosphoserine: S68 and S77. Helical transmembrane passes span 137-157 (ISLR…CVLL) and 161-181 (VTLA…VGQL). The HXXXXD motif motif lies at 229 to 234 (HTSPID).

This sequence belongs to the 1-acyl-sn-glycerol-3-phosphate acyltransferase family. As to expression, widely expressed. Expressed in liver, kidney, testis, brain, heart, skeletal muscle, thyroid, prostate, thymus and placenta. Also expressed lung and adipose tissue.

It localises to the endoplasmic reticulum membrane. It catalyses the reaction sn-glycerol 3-phosphate + an acyl-CoA = a 1-acyl-sn-glycero-3-phosphate + CoA. The enzyme catalyses a 1-acyl-sn-glycero-3-phosphate + an acyl-CoA = a 1,2-diacyl-sn-glycero-3-phosphate + CoA. It carries out the reaction dodecanoyl-CoA + sn-glycerol 3-phosphate = 1-dodecanoyl-sn-glycerol 3-phosphate + CoA. The catalysed reaction is sn-glycerol 3-phosphate + hexadecanoyl-CoA = 1-hexadecanoyl-sn-glycero-3-phosphate + CoA. It catalyses the reaction sn-glycerol 3-phosphate + (9Z)-octadecenoyl-CoA = 1-(9Z-octadecenoyl)-sn-glycero-3-phosphate + CoA. The enzyme catalyses (9Z,12Z)-octadecadienoyl-CoA + sn-glycerol 3-phosphate = 1-(9Z,12Z)-octadecadienoyl-sn-glycero-3-phosphate + CoA. It carries out the reaction 1-tetradecanoyl-sn-glycerol 3-phosphate + (9Z)-octadecenoyl-CoA = 1-tetradecanoyl-2-(9Z)-octadecenoyl-sn-glycero-3-phosphate + CoA. The catalysed reaction is 1-hexadecanoyl-sn-glycero-3-phosphate + (9Z)-octadecenoyl-CoA = 1-hexadecanoyl-2-(9Z-octadecenoyl)-sn-glycero-3-phosphate + CoA. It catalyses the reaction 1-(9Z-octadecenoyl)-sn-glycero-3-phosphate + (9Z)-octadecenoyl-CoA = 1,2-di-(9Z-octadecenoyl)-sn-glycero-3-phosphate + CoA. The enzyme catalyses 1-(6Z,9Z,12Z-octadecatrienoyl)-sn-glycero-3-phosphate + (9Z)-octadecenoyl-CoA = (6Z,9Z,12Z)-octadecatrienoyl-2-(9Z)-octadecenoyl-sn-glycero-3-phosphate + CoA. It carries out the reaction 1-(9Z,12Z,15Z)-octadecatrienoyl-sn-glycero-3-phosphate + (9Z)-octadecenoyl-CoA = 1-(9Z,12Z,15Z)-octadecatrienoyl-2-(9Z)-octadecenoyl-sn-glycero-3-phosphate + CoA. The catalysed reaction is 1-(9Z-octadecenoyl)-sn-glycero-3-phosphate + tetradecanoyl-CoA = 1-(9Z)-octadecenoyl-2-tetradecanoyl-sn-glycero-3-phosphate + CoA. It catalyses the reaction 1-(9Z-octadecenoyl)-sn-glycero-3-phosphate + hexadecanoyl-CoA = 1-(9Z)-octadecenoyl-2-hexadecanoyl-sn-glycero-3-phosphate + CoA. The enzyme catalyses 1-(9Z-octadecenoyl)-sn-glycero-3-phosphate + octadecanoyl-CoA = 1-(9Z-octadecenoyl)-2-octadecanoyl-sn-glycero-3-phosphate + CoA. It carries out the reaction 1-(9Z-octadecenoyl)-sn-glycero-3-phosphate + (9Z,12Z)-octadecadienoyl-CoA = 1-(9Z)-octadecenoyl-2-(9Z,12Z)-octadecadienoyl-sn-glycero-3-phosphate + CoA. The catalysed reaction is 1-(5Z,8Z,11Z,14Z-eicosatetraenoyl)-sn-glycero-3-phosphate + (9Z)-octadecenoyl-CoA = 1-(5Z,8Z,11Z,14Z)-eicosatetraenoyl-2-(9Z)-octadecenoyl-sn-glycero-3-phosphate + CoA. It participates in glycerolipid metabolism; triacylglycerol biosynthesis. The protein operates within phospholipid metabolism; CDP-diacylglycerol biosynthesis; CDP-diacylglycerol from sn-glycerol 3-phosphate: step 1/3. Its activity is regulated as follows. Inhibited by N-ethylmaleimide (NEM). Functionally, converts glycerol-3-phosphate to 1-acyl-sn-glycerol-3-phosphate (lysophosphatidic acid or LPA) by incorporating an acyl moiety at the sn-1 position of the glycerol backbone. Also converts LPA into 1,2-diacyl-sn-glycerol-3-phosphate (phosphatidic acid or PA) by incorporating an acyl moiety at the sn-2 position of the glycerol backbone. Protects cells against lipotoxicity. The sequence is that of Glycerol-3-phosphate acyltransferase 3 from Homo sapiens (Human).